We begin with the raw amino-acid sequence, 533 residues long: Early growth response protein 1 (533 aa).

Disordered regions lie at residues 1 to 94 (MAAA…EQPY) and 161 to 237 (MTNP…PPPA). Residues 68–77 (SGGGGGGGSN) show a composition bias toward gly residues. The segment covering 164-189 (PPTSSSSAPSPAASSSSSASQSPPLS) has biased composition (low complexity). Lysine 303 is covalently cross-linked (Glycyl lysine isopeptide (Lys-Gly) (interchain with G-Cter in SUMO2)). The tract at residues 316 to 336 (PSRMRKYPNRPSKTPPHERPY) is disordered. 3 consecutive C2H2-type zinc fingers follow at residues 336-360 (YACP…IRIH), 366-388 (FQCR…IRTH), and 394-416 (FACD…TKIH). The tract at residues 407–478 (DERKRHTKIH…SSTYPSPAHS (72 aa)) is disordered. Residues 411 to 421 (RHTKIHLRQKD) are compositionally biased toward basic residues. A compositionally biased stretch (low complexity) spans 427 to 475 (SVVASPAASSLSSYPSPVATSYPSPATTSFPSPVPTSYSSPGSSTYPSP).

It belongs to the EGR C2H2-type zinc-finger protein family. In terms of assembly, interacts with SNAI1 and SP1 upon 12-O-tetradecanoylphorbol-13-acetate (TPA) induction. In terms of tissue distribution, detected in lung vasculature and in mononuclear phagocytes. Detected in liver (at protein level). Expressed in the liver in a circadian manner.

The protein resides in the nucleus. The protein localises to the cytoplasm. Functionally, transcriptional regulator. Recognizes and binds to the DNA sequence 5'-GCG(T/G)GGGCG-3'(EGR-site) in the promoter region of target genes. Binds double-stranded target DNA, irrespective of the cytosine methylation status. Regulates the transcription of numerous target genes, and thereby plays an important role in regulating the response to growth factors, DNA damage, and ischemia. Plays a role in the regulation of cell survival, proliferation and cell death. Activates expression of p53/TP53 and TGFB1, and thereby helps prevent tumor formation. Required for normal progress through mitosis and normal proliferation of hepatocytes after partial hepatectomy. Mediates responses to ischemia and hypoxia; regulates the expression of proteins such as IL1B and CXCL2 that are involved in inflammatory processes and development of tissue damage after ischemia. Regulates biosynthesis of luteinizing hormone (LHB) in the pituitary. Regulates the amplitude of the expression rhythms of clock genes: BMAL1, PER2 and NR1D1 in the liver via the activation of PER1 (clock repressor) transcription. Regulates the rhythmic expression of core-clock gene BMAL1 in the suprachiasmatic nucleus (SCN). This is Early growth response protein 1 (Egr1) from Mus musculus (Mouse).